The chain runs to 657 residues: Endoplasmic reticulum chaperone BiP homolog (657 aa).

Positions 1 to 17 are cleaved as a signal peptide; it reads MKVFSLILIAFVANAYC. ATP is bound by residues 38 to 41, lysine 99, 229 to 231, 295 to 302, and 366 to 369; these read GTTY, GGT, EKAKRALS, and GSTR. A nucleotide-binding (NBD) region spans residues 128 to 282; that stretch reads KPNVEVKVGS…KKKSGKDLRK (155 aa). The interval 402–502 is substrate-binding (SBD); the sequence is VQAGVIGGVE…PRGVPQIEVT (101 aa). Positions 607–657 are disordered; it reads LGSNQDASTEENKEQKKELESVVQPIVSKLYSAGGQGEQASEEPSEDHDEL. Residues 616 to 626 show a composition bias toward basic and acidic residues; it reads EENKEQKKELE. Positions 646 to 657 are enriched in acidic residues; it reads ASEEPSEDHDEL. A Prevents secretion from ER motif is present at residues 654-657; that stretch reads HDEL.

The protein belongs to the heat shock protein 70 family.

Its subcellular location is the endoplasmic reticulum lumen. It catalyses the reaction ATP + H2O = ADP + phosphate + H(+). With respect to regulation, the chaperone activity is regulated by ATP-induced allosteric coupling of the nucleotide-binding (NBD) and substrate-binding (SBD) domains. In the ADP-bound and nucleotide-free (apo) states, the two domains have little interaction. In contrast, in the ATP-bound state the two domains are tightly coupled, which results in drastically accelerated kinetics in both binding and release of polypeptide substrates. J domain-containing co-chaperones stimulate the ATPase activity and are required for efficient substrate recognition. Endoplasmic reticulum chaperone that plays a key role in protein folding and quality control in the endoplasmic reticulum lumen. Required for ER dynamics during the first embryonic cell divisions. Specifically, controls ER transition into sheet-like structures at the onset of mitosis, possibly by regulating homotypic membrane fusion. The sequence is that of Endoplasmic reticulum chaperone BiP homolog (hsp-4) from Caenorhabditis elegans.